A 164-amino-acid chain; its full sequence is Cyclic pyranopterin monophosphate synthase (164 aa).

Substrate contacts are provided by residues Met75 to His77 and Met112 to Glu113. Asp127 is an active-site residue.

This sequence belongs to the MoaC family. In terms of assembly, homohexamer; trimer of dimers.

It catalyses the reaction (8S)-3',8-cyclo-7,8-dihydroguanosine 5'-triphosphate = cyclic pyranopterin phosphate + diphosphate. The protein operates within cofactor biosynthesis; molybdopterin biosynthesis. In terms of biological role, catalyzes the conversion of (8S)-3',8-cyclo-7,8-dihydroguanosine 5'-triphosphate to cyclic pyranopterin monophosphate (cPMP). The polypeptide is Cyclic pyranopterin monophosphate synthase (Desulforamulus reducens (strain ATCC BAA-1160 / DSM 100696 / MI-1) (Desulfotomaculum reducens)).